We begin with the raw amino-acid sequence, 284 residues long: 4-hydroxybenzoate octaprenyltransferase (284 aa).

The next 8 helical transmembrane spans lie at 14–34, 41–61, 93–113, 134–154, 166–186, 209–229, 233–253, and 262–282; these read VHQP…LWIT, FIVL…GCVI, WVFF…NNII, YIYL…LIVY, WLLF…YAMV, IVIG…GIVE, IIFY…QQVL, and CLWA…GIVL.

It belongs to the UbiA prenyltransferase family. The cofactor is Mg(2+).

It localises to the cell inner membrane. The catalysed reaction is all-trans-octaprenyl diphosphate + 4-hydroxybenzoate = 4-hydroxy-3-(all-trans-octaprenyl)benzoate + diphosphate. It participates in cofactor biosynthesis; ubiquinone biosynthesis. Functionally, catalyzes the prenylation of para-hydroxybenzoate (PHB) with an all-trans polyprenyl group. Mediates the second step in the final reaction sequence of ubiquinone-8 (UQ-8) biosynthesis, which is the condensation of the polyisoprenoid side chain with PHB, generating the first membrane-bound Q intermediate 3-octaprenyl-4-hydroxybenzoate. The polypeptide is 4-hydroxybenzoate octaprenyltransferase (Blochmanniella floridana).